The primary structure comprises 970 residues: Sodium/calcium exchanger 1 (970 aa).

The N-terminal stretch at 1–32 (MLRLSLSPTYSLGFHLLAMMTLLISHVDHITA) is a signal peptide. Over 33–71 (ETEMVEEGNETGECTGSYYCKKGVILPIWEPQDPSFGDK) the chain is Extracellular. A glycan (N-linked (GlcNAc...) asparagine) is linked at N41. Residues 72–92 (IARATVYFVAMVYMFLGVSII) traverse the membrane as a helical segment. The Cytoplasmic segment spans residues 93-133 (ADRFMSSIEVITSQEKEITIKKPNGETTKTTVRIWNETVSN). A helical transmembrane segment spans residues 134 to 154 (LTLMALGSSAPEILLSVIEVC). The stretch at 138–178 (ALGSSAPEILLSVIEVCGHNFTAGDLGPSTIVGSAAFNMFI) is one Alpha-1 repeat. The Extracellular segment spans residues 155-167 (GHNFTAGDLGPST). N-linked (GlcNAc...) asparagine glycosylation is present at N157. A helical transmembrane segment spans residues 168-188 (IVGSAAFNMFIIIALCVYVVP). The Cytoplasmic segment spans residues 189-201 (DGETRKIKHLRVF). The helical transmembrane segment at 202 to 222 (FVTAAWSIFAYTWLYIILSVI) threads the bilayer. The Extracellular segment spans residues 223–228 (SPGVVE). The chain crosses the membrane as a helical span at residues 229–249 (VWEGLLTFFFFPICVVFAWVA). The Cytoplasmic portion of the chain corresponds to 250 to 797 (DRRLLFYKYV…FVPPTEYWNG (548 aa)). Residues 251 to 270 (RRLLFYKYVYKRYRAGKQRG) form a putative calmodulin-binding region region. A phosphoserine mark is found at S282 and S389. Calx-beta domains lie at 393–493 (VNTE…VHLS) and 524–624 (ATVT…LEIG). Ca(2+)-binding residues include E417, D453, D478, D479, I481, E483, E486, D530, D531, D532, E548, D584, D610, E611, E612, and E715. The chain crosses the membrane as a helical span at residues 798-818 (WACFIVSILMIGLLTAFIGDL). Residues 819–821 (ASH) lie on the Extracellular side of the membrane. A helical membrane pass occupies residues 822 to 842 (FGCTIGLKDSVTAVVFVALGT). An Alpha-2 repeat occupies 839-875 (ALGTSVPDTFASKVAATQDQYADASIGNVTGSNAVNV). At 843 to 871 (SVPDTFASKVAATQDQYADASIGNVTGSN) the chain is on the cytoplasmic side. The chain crosses the membrane as a helical span at residues 872–892 (AVNVFLGIGVAWSIAAIYHAA). The Extracellular portion of the chain corresponds to 893–903 (NGEQFKVSPGT). A helical membrane pass occupies residues 904 to 924 (LAFSVTLFTIFAFINVGVLLY). Residues 925-941 (RRRPEIGGELGGPRTAK) are Cytoplasmic-facing. A helical membrane pass occupies residues 942–962 (LLTSCLFVLLWLLYIFFSSLE). Topologically, residues 963–970 (AYCHIKGF) are extracellular.

This sequence belongs to the Ca(2+):cation antiporter (CaCA) (TC 2.A.19) family. SLC8 subfamily.

Its subcellular location is the cell membrane. The catalysed reaction is Ca(2+)(in) + 3 Na(+)(out) = Ca(2+)(out) + 3 Na(+)(in). With respect to regulation, activated by micromolar levels of Ca(2+). Mediates the exchange of one Ca(2+) ion against three to four Na(+) ions across the cell membrane, and thereby contributes to the regulation of cytoplasmic Ca(2+) levels and Ca(2+)-dependent cellular processes. Contributes to Ca(2+) transport during excitation-contraction coupling in muscle. In a first phase, voltage-gated channels mediate the rapid increase of cytoplasmic Ca(2+) levels due to release of Ca(2+) stores from the endoplasmic reticulum. SLC8A1 mediates the export of Ca(2+) from the cell during the next phase, so that cytoplasmic Ca(2+) levels rapidly return to baseline. Required for normal embryonic heart development and the onset of heart contractions. The protein is Sodium/calcium exchanger 1 (SLC8A1) of Cavia porcellus (Guinea pig).